The sequence spans 743 residues: Probable TonB-dependent siderophore receptor PiuA (743 aa).

The first 28 residues, 1-28, serve as a signal peptide directing secretion; that stretch reads MSLIRTRKKIVSSAIASSLSMIATTAMA. One can recognise a TBDR plug domain in the interval 61–167; that stretch reads PLLDTPKSVS…VGGSINMISK (107 aa). Residues 172–743 enclose the TBDR beta-barrel domain; that stretch reads GDFLEGSVAA…SAVLAVNFKY (572 aa). Cystine bridges form between Cys408-Cys416 and Cys627-Cys632.

It belongs to the TonB-dependent receptor family.

The protein resides in the cell outer membrane. In terms of biological role, probably involved in the initial step of iron uptake by binding iron chelating siderophores, thereby allowing extraction of iron from the environment. May bind the siderophore, ferric enterobactin, with micromolar affinity. In Acinetobacter baumannii (strain ATCC 19606 / DSM 30007 / JCM 6841 / CCUG 19606 / CIP 70.34 / NBRC 109757 / NCIMB 12457 / NCTC 12156 / 81), this protein is Probable TonB-dependent siderophore receptor PiuA.